The following is a 410-amino-acid chain: Cysteine desulfurase IscS (410 aa).

Pyridoxal 5'-phosphate-binding positions include Ala-80 to Thr-81, Asn-160, Gln-188, and Ser-208 to His-210. Residue Lys-211 is modified to N6-(pyridoxal phosphate)lysine. Thr-248 provides a ligand contact to pyridoxal 5'-phosphate. Residue Cys-334 is the Cysteine persulfide intermediate of the active site. [2Fe-2S] cluster is bound at residue Cys-334.

It belongs to the class-V pyridoxal-phosphate-dependent aminotransferase family. NifS/IscS subfamily. As to quaternary structure, homodimer. Forms a heterotetramer with IscU, interacts with other sulfur acceptors. It depends on pyridoxal 5'-phosphate as a cofactor.

The protein localises to the cytoplasm. The catalysed reaction is (sulfur carrier)-H + L-cysteine = (sulfur carrier)-SH + L-alanine. It functions in the pathway cofactor biosynthesis; iron-sulfur cluster biosynthesis. Master enzyme that delivers sulfur to a number of partners involved in Fe-S cluster assembly, tRNA modification or cofactor biosynthesis. Catalyzes the removal of elemental sulfur atoms from cysteine to produce alanine. Functions as a sulfur delivery protein for Fe-S cluster synthesis onto IscU, an Fe-S scaffold assembly protein, as well as other S acceptor proteins. This Rickettsia bellii (strain OSU 85-389) protein is Cysteine desulfurase IscS.